A 149-amino-acid chain; its full sequence is Large ribosomal subunit protein uL15 (149 aa).

2 stretches are compositionally biased toward basic residues: residues 1-13 (MPTRLTKTRKHRG) and 21-42 (RIGKHRKHPGGRGKAGGQHHHR). Positions 1–44 (MPTRLTKTRKHRGNVSAGKGRIGKHRKHPGGRGKAGGQHHHRTN) are disordered.

It belongs to the universal ribosomal protein uL15 family. As to quaternary structure, component of the large ribosomal subunit. Mature ribosomes consist of a small (40S) and a large (60S) subunit. The 40S subunit contains about 32 different proteins and 1 molecule of RNA (18S). The 60S subunit contains 45 different proteins and 3 molecules of RNA (25S, 5.8S and 5S).

The protein resides in the cytoplasm. Component of the ribosome, a large ribonucleoprotein complex responsible for the synthesis of proteins in the cell. The small ribosomal subunit (SSU) binds messenger RNAs (mRNAs) and translates the encoded message by selecting cognate aminoacyl-transfer RNA (tRNA) molecules. The large subunit (LSU) contains the ribosomal catalytic site termed the peptidyl transferase center (PTC), which catalyzes the formation of peptide bonds, thereby polymerizing the amino acids delivered by tRNAs into a polypeptide chain. The nascent polypeptides leave the ribosome through a tunnel in the LSU and interact with protein factors that function in enzymatic processing, targeting, and the membrane insertion of nascent chains at the exit of the ribosomal tunnel. This Candida albicans (strain SC5314 / ATCC MYA-2876) (Yeast) protein is Large ribosomal subunit protein uL15.